Consider the following 236-residue polypeptide: SERTA domain-containing protein 1 (236 aa).

The disordered stretch occupies residues 1-20; sequence MLSKGLKRKREEEEEKEPLA. The region spanning 38-85 is the SERTA domain; sequence PAVASSSLFDLSVLKLHHSLQQSEPDLRHLVLVVNTLRRIQASMAPAA. Positions 189–211 are disordered; the sequence is PASEGLKPGPEDGPGKEEAPELD. A compositionally biased stretch (basic and acidic residues) spans 197–207; it reads GPEDGPGKEEA.

Interacts with the PHD-bromodomain of TIF1, TRIM28/TIF1B and p300/CBP. Interacts with E2F1 and TFDP1; modulates transactivation activity of TFDP1/E2F complexes. Also interacts with CDK4. In terms of processing, polyubiquitinated, which promotes proteasomal degradation.

Acts at E2F-responsive promoters as coregulator to integrate signals provided by PHD- and/or bromodomain-containing transcription factors. Stimulates E2F1/TFDP1 transcriptional activity. Renders the activity of cyclin D1/CDK4 resistant to the inhibitory effects of CDKN2A/p16INK4A. This chain is SERTA domain-containing protein 1 (SERTAD1), found in Homo sapiens (Human).